Consider the following 418-residue polypeptide: NADH-quinone oxidoreductase subunit D (418 aa).

Belongs to the complex I 49 kDa subunit family. As to quaternary structure, NDH-1 is composed of 14 different subunits. Subunits NuoB, C, D, E, F, and G constitute the peripheral sector of the complex.

It is found in the cell inner membrane. It carries out the reaction a quinone + NADH + 5 H(+)(in) = a quinol + NAD(+) + 4 H(+)(out). Its function is as follows. NDH-1 shuttles electrons from NADH, via FMN and iron-sulfur (Fe-S) centers, to quinones in the respiratory chain. The immediate electron acceptor for the enzyme in this species is believed to be ubiquinone. Couples the redox reaction to proton translocation (for every two electrons transferred, four hydrogen ions are translocated across the cytoplasmic membrane), and thus conserves the redox energy in a proton gradient. In Bordetella bronchiseptica (strain ATCC BAA-588 / NCTC 13252 / RB50) (Alcaligenes bronchisepticus), this protein is NADH-quinone oxidoreductase subunit D.